Reading from the N-terminus, the 162-residue chain is NADH-quinone oxidoreductase subunit I (162 aa).

4Fe-4S ferredoxin-type domains follow at residues 52 to 82 and 93 to 122; these read LRRY…IEAG and VRYD…EGPN. Residues C62, C65, C68, C72, C102, C105, C108, and C112 each contribute to the [4Fe-4S] cluster site.

The protein belongs to the complex I 23 kDa subunit family. As to quaternary structure, NDH-1 is composed of 14 different subunits. Subunits NuoA, H, J, K, L, M, N constitute the membrane sector of the complex. It depends on [4Fe-4S] cluster as a cofactor.

Its subcellular location is the cell inner membrane. The catalysed reaction is a quinone + NADH + 5 H(+)(in) = a quinol + NAD(+) + 4 H(+)(out). In terms of biological role, NDH-1 shuttles electrons from NADH, via FMN and iron-sulfur (Fe-S) centers, to quinones in the respiratory chain. The immediate electron acceptor for the enzyme in this species is believed to be ubiquinone. Couples the redox reaction to proton translocation (for every two electrons transferred, four hydrogen ions are translocated across the cytoplasmic membrane), and thus conserves the redox energy in a proton gradient. In Nitrobacter winogradskyi (strain ATCC 25391 / DSM 10237 / CIP 104748 / NCIMB 11846 / Nb-255), this protein is NADH-quinone oxidoreductase subunit I.